The following is a 99-amino-acid chain: MFAVVETGGKQYKVKEQDVIKVELLKAGIGEKVLLKSLATFNNDGSGSFSASSGSVSAEVVAHCRSDKIIVFKKRRRKNYRRKNGHRQNMTVLRVVEVR.

The protein belongs to the bacterial ribosomal protein bL21 family. Part of the 50S ribosomal subunit. Contacts protein L20.

This protein binds to 23S rRNA in the presence of protein L20. This is Large ribosomal subunit protein bL21 from Anaplasma phagocytophilum (strain HZ).